The following is a 105-amino-acid chain: Integration host factor subunit beta (105 aa).

It belongs to the bacterial histone-like protein family. As to quaternary structure, heterodimer of an alpha and a beta chain.

In terms of biological role, this protein is one of the two subunits of integration host factor, a specific DNA-binding protein that functions in genetic recombination as well as in transcriptional and translational control. The chain is Integration host factor subunit beta from Nitrosomonas eutropha (strain DSM 101675 / C91 / Nm57).